A 481-amino-acid polypeptide reads, in one-letter code: Phosphoglycerate kinase, chloroplastic (481 aa).

A chloroplast-targeting transit peptide spans M1–S75. The (2R)-3-phosphoglycerate site is built by A98, D99, N101, R115, S137, H138, G140, R141, R196, H228, and R229. G274 contacts ADP. G274 contributes to the CDP binding site. The AMP site is built by K276 and K280. An ATP-binding site is contributed by K280. G298 lines the ADP pocket. G298 lines the CDP pocket. Residues G299 and G371 each coordinate AMP. 2 residues coordinate ATP: G299 and G371. Residues G396 and F401 each contribute to the CDP site. Residue F401 coordinates ADP. E402 contacts AMP. E402, D433, and S434 together coordinate ATP. Position 433 (D433) interacts with Mg(2+).

This sequence belongs to the phosphoglycerate kinase family. As to quaternary structure, monomer. The cofactor is Mg(2+).

It localises to the plastid. Its subcellular location is the chloroplast. The enzyme catalyses (2R)-3-phosphoglycerate + ATP = (2R)-3-phospho-glyceroyl phosphate + ADP. It participates in carbohydrate biosynthesis; Calvin cycle. This Nicotiana tabacum (Common tobacco) protein is Phosphoglycerate kinase, chloroplastic.